Consider the following 1514-residue polypeptide: Neuropathy target esterase sws (1514 aa).

The Lumenal portion of the chain corresponds to 1-34 (MDVLELLRASATGSYTALFSDAWCQYVSKQITNS). A helical membrane pass occupies residues 35-55 (MYLYCALGVLSMVFLAWFMYF). Residues 56 to 1514 (KRLARIRLRD…KGGAYNETKN (1459 aa)) are Cytoplasmic-facing. An a nucleoside 3',5'-cyclic phosphate-binding site is contributed by 175–302 (IFGHFEKPVF…IRVIQVIMIR (128 aa)). A compositionally biased stretch (polar residues) spans 337–352 (STHSSQCSRQTGSQPT). Residues 337–418 (STHSSQCSRQ…NPNPDVINTS (82 aa)) form a disordered region. Over residues 356 to 374 (PAPTCSNTTTTASPTTANT) the composition is skewed to low complexity. Position 457 is a phosphoserine (Ser457). A nucleoside 3',5'-cyclic phosphate is bound by residues 515–644 (ELGL…VVRR) and 633–760 (IVLD…LSHR). The 167-residue stretch at 987–1153 (LVLGGGGARG…VNNLPGQLWR (167 aa)) folds into the PNPLA domain. Residues 991 to 996 (GGGARG) carry the GXGXXG motif. The GXSXG motif lies at 1018-1022 (GVSIG). The active-site Nucleophile is the Ser1020. The active-site Proton acceptor is the Asp1140. A DGA/G motif is present at residues 1140-1142 (DGG). Ser1234 is modified (phosphoserine). Residues 1409–1514 (EKSIHSAATS…KGGAYNETKN (106 aa)) form a disordered region. Basic and acidic residues-rich tracts occupy residues 1425–1449 (RSREFHKLEQDRSVEITRLKDETER) and 1456–1470 (LDRKGDGQEQEKEPE). Positions 1471 to 1489 (QEQELETEEPNQENTEVEE) are enriched in acidic residues.

It belongs to the NTE family. As to quaternary structure, interacts with Pka-C3; interaction inhibits the catalytic function of Pka-C3 and the esterase activity of sws.

The protein resides in the endoplasmic reticulum membrane. The catalysed reaction is a 1-acyl-sn-glycero-3-phosphocholine + H2O = sn-glycerol 3-phosphocholine + a fatty acid + H(+). In terms of biological role, phospholipase B that deacylates intracellular phosphatidylcholine (PtdCho), generating glycerophosphocholine (GroPtdCho). This deacylation occurs at both sn-2 and sn-1 positions of PtdCho. Its specific chemical modification by certain organophosphorus (OP) compounds leads to distal axonopathy. Plays a role in the signaling mechanism between neurons and glia that regulates glia wrapping during development of the adult brain. Essential for membrane lipid homeostasis and cell survival in both neurons and glia of the adult brain. The polypeptide is Neuropathy target esterase sws (Drosophila ananassae (Fruit fly)).